Reading from the N-terminus, the 284-residue chain is Large ribosomal subunit protein uL2 (284 aa).

Residues arginine 232–lysine 284 form a disordered region. Basic and acidic residues predominate over residues aspartate 240–histidine 250. The span at lysine 264 to lysine 284 shows a compositional bias: basic residues.

The protein belongs to the universal ribosomal protein uL2 family. In terms of assembly, part of the 50S ribosomal subunit. Forms a bridge to the 30S subunit in the 70S ribosome.

One of the primary rRNA binding proteins. Required for association of the 30S and 50S subunits to form the 70S ribosome, for tRNA binding and peptide bond formation. It has been suggested to have peptidyltransferase activity; this is somewhat controversial. Makes several contacts with the 16S rRNA in the 70S ribosome. In Chlamydia abortus (strain DSM 27085 / S26/3) (Chlamydophila abortus), this protein is Large ribosomal subunit protein uL2.